A 573-amino-acid chain; its full sequence is 2-succinyl-5-enolpyruvyl-6-hydroxy-3-cyclohexene-1-carboxylate synthase (573 aa).

The protein belongs to the TPP enzyme family. MenD subfamily. In terms of assembly, homodimer. Requires Mg(2+) as cofactor. Mn(2+) is required as a cofactor. The cofactor is thiamine diphosphate.

The catalysed reaction is isochorismate + 2-oxoglutarate + H(+) = 5-enolpyruvoyl-6-hydroxy-2-succinyl-cyclohex-3-ene-1-carboxylate + CO2. It functions in the pathway quinol/quinone metabolism; 1,4-dihydroxy-2-naphthoate biosynthesis; 1,4-dihydroxy-2-naphthoate from chorismate: step 2/7. Its pathway is quinol/quinone metabolism; menaquinone biosynthesis. Catalyzes the thiamine diphosphate-dependent decarboxylation of 2-oxoglutarate and the subsequent addition of the resulting succinic semialdehyde-thiamine pyrophosphate anion to isochorismate to yield 2-succinyl-5-enolpyruvyl-6-hydroxy-3-cyclohexene-1-carboxylate (SEPHCHC). The protein is 2-succinyl-5-enolpyruvyl-6-hydroxy-3-cyclohexene-1-carboxylate synthase of Shewanella baltica (strain OS195).